An 881-amino-acid polypeptide reads, in one-letter code: Valine--tRNA ligase (881 aa).

Positions 49-59 (PNVTGKLHLGH) match the 'HIGH' region motif. A 'KMSKS' region motif is present at residues 526–530 (KMSKS). Lys529 provides a ligand contact to ATP. A coiled-coil region spans residues 810-881 (LADLINLDEE…VRQRLADLEK (72 aa)).

The protein belongs to the class-I aminoacyl-tRNA synthetase family. ValS type 1 subfamily. In terms of assembly, monomer.

It localises to the cytoplasm. The enzyme catalyses tRNA(Val) + L-valine + ATP = L-valyl-tRNA(Val) + AMP + diphosphate. Its function is as follows. Catalyzes the attachment of valine to tRNA(Val). As ValRS can inadvertently accommodate and process structurally similar amino acids such as threonine, to avoid such errors, it has a 'posttransfer' editing activity that hydrolyzes mischarged Thr-tRNA(Val) in a tRNA-dependent manner. The protein is Valine--tRNA ligase of Bacillus cereus (strain ATCC 14579 / DSM 31 / CCUG 7414 / JCM 2152 / NBRC 15305 / NCIMB 9373 / NCTC 2599 / NRRL B-3711).